Reading from the N-terminus, the 526-residue chain is Peptide chain release factor 3 (526 aa).

Positions 11–277 constitute a tr-type G domain; that stretch reads SKRRTFAIIS…SLIKWAPSPL (267 aa). Residues 20-27, 88-92, and 142-145 contribute to the GTP site; these read SHPDAGKT, DTPGH, and NKLD.

It belongs to the TRAFAC class translation factor GTPase superfamily. Classic translation factor GTPase family. PrfC subfamily.

The protein localises to the cytoplasm. Increases the formation of ribosomal termination complexes and stimulates activities of RF-1 and RF-2. It binds guanine nucleotides and has strong preference for UGA stop codons. It may interact directly with the ribosome. The stimulation of RF-1 and RF-2 is significantly reduced by GTP and GDP, but not by GMP. The protein is Peptide chain release factor 3 of Buchnera aphidicola subsp. Acyrthosiphon pisum (strain Tuc7).